A 1523-amino-acid polypeptide reads, in one-letter code: MSWSSIKLSRLPDATISVWGHTATISGEKDIVIFGGFDFCIEKPTNTTYILHTSQTNGLTKPSVSGSLPPPIYGHSSTQVGRKMFVFGGSLQDNVQVNDMYQFNTSNYSWSKPRPMGEPPIPRYGHSASLIYDNYILIFGGNNTKSSKPLNDIHIFNTERNSWTKPSSNSSTGEIIFNPHDISPRSSTTTPTHQSVNGSNSNSSSSSRVRSATISSHNNSPIVMPLNNNNNNNNNSNNSNNSNNNGGGSPMTTPPTLQQLHLSQLMANGIGMGGSISNGNSDSPPLTPSMMALESSMLNGFKSPLSLSQRLLRSGFRSSPPSARYFHSCSVINGKAFIFGGYNGTTLLNDLYILNIESMEWICPHTKGDLPTPRAGHTSIAIGSRLFIFGGTIEGDPSSSNAHCDNDLYMFEPELNYWTLLKTSGTLPSPRTGHVCLPISSKILIIGGSDAILNNKLKLSNTYHSLETLKLDFSHYSRGGSGGGSNNNIIIHPITSSNSTSSNSIITNYLPHLKPRSSSNSGGGGGSITNTPTTSSLHIKDNSASPSPLTPRSIARNSPKSSIFHDNINNNSNNNLLNTLQEASKFELSPGTPKSIRGIDSLSSVSLTQSIDRNGGSGGGSGGGNGVVSNDRGEFLRHYTTQSILINKNNNNNNNNNSGGSNLSISSNSGSNNSINSNDGLVLQCSTPLCIKKYNSLKDSYLELKQKYQEEREKRLELEKELERYRLSSPITSASSLVDTLSSPNNLNINSNNSTTTTTTTTTTTTTPIPLSTSNNNNNNNNNSTLTVQDQVTTSKQILEIYEDIYNLWGYYEKRVKWKENTEKEANQQLEVIKSKIDLFTSMVGLENHFSFNDDTKSCCSENINGDHNQQQQQQQQQNPQFQIDDNISETNSQISEPALIHETLTPRKSRENSVHHSRSVSNPIPLLSQIVKQSKSGDSTLTVPQQLHSSHNNLIQLASISTPQKPPQQPQQQQQQQPPQENGKEPSKSTQKIFKLLISKKNRASGHFKLSSSNESSNSEETTPTFSNNPNLINDEDDDSQQHQQQTNIGSNSISNINTSNSTTSLSSSVSSTSLQTQEEFEASERSKQKKRLGKALKQMINKDRQLKETAAAALAVSNSNGNLGGGGGGGSINGTTNVSGNGANNLGGLVLTSDKEKEKLEKEREKSERIEREKQEKEREKLEKEREKSERIEREKLEKAEKERLEKEKIEKEKLEKKHKKIKGLFGAKSSNKESLPFRRDVIEKVINHLRENSLDTEGIFRLSGNMESVRGIVKSFAHGEPNLSFEVHNISNALKHYLRSLDPPLIPYEFFLMLLDARKNEDAETIRNIFWKIPSDNRVVLTLLVDLMVKISENSNVNKMNSKNLSIVFGPTILKPRTPTLDRMALMTETQLQCGIIQTFIEDFHYIFSEFPTSGPKSFLGDDDYDSSSFGSNNTPSSHSPHSSSPTLNPAVTTTTTTTTTTNTTTTTNTTTTPTSATISPNIIQTNNCDSALCTPTTLSSTAAIIQSNNNNRTDSNRNN.

Kelch repeat units lie at residues 30-76 (DIVI…YGHS), 83-133 (KMFV…LIYD), and 135-184 (YILI…DISP). Polar residues-rich tracts occupy residues 161-173 (NSWT…SSTG) and 184-194 (PRSSTTTPTHQ). Residues 161-256 (NSWTKPSSNS…GGSPMTTPPT (96 aa)) form a disordered region. A compositionally biased stretch (low complexity) spans 195–211 (SVNGSNSNSSSSSRVRS). The segment covering 212–221 (ATISSHNNSP) has biased composition (polar residues). Over residues 227–244 (NNNNNNNNNSNNSNNSNN) the composition is skewed to low complexity. Kelch repeat units follow at residues 335–384 (KAFI…AIGS), 386–441 (LFIF…PISS), and 443–496 (ILII…PITS). 3 disordered regions span residues 510–569 (LPHL…DNIN), 609–631 (QSID…VSND), and 647–671 (NKNN…NSGS). Gly residues predominate over residues 615-626 (GGSGGGSGGGNG). A coiled-coil region spans residues 690-729 (CIKKYNSLKDSYLELKQKYQEEREKRLELEKELERYRLSS). Positions 748 to 786 (NINSNNSTTTTTTTTTTTTTPIPLSTSNNNNNNNNNSTL) are disordered. Positions 812-840 (YEKRVKWKENTEKEANQQLEVIKSKIDLF) form a coiled coil. Disordered stretches follow at residues 861–881 (SENI…QNPQ), 905–927 (LTPR…PIPL), 963–991 (TPQK…SKST), 1006–1096 (SGHF…RLGK), and 1143–1194 (NGAN…SERI). A compositionally biased stretch (low complexity) spans 870 to 881 (QQQQQQQQQNPQ). The segment covering 905 to 915 (LTPRKSRENSV) has biased composition (basic and acidic residues). Low complexity-rich tracts occupy residues 971–981 (PQQQQQQQPPQ), 1012–1030 (SSSN…FSNN), 1043–1079 (QHQQ…LQTQ), and 1143–1153 (NGANNLGGLVL). Residues 1151 to 1228 (LVLTSDKEKE…KKHKKIKGLF (78 aa)) adopt a coiled-coil conformation. The segment covering 1155 to 1194 (SDKEKEKLEKEREKSERIEREKQEKEREKLEKEREKSERI) has biased composition (basic and acidic residues). One can recognise a Rho-GAP domain in the interval 1233–1411 (SNKESLPFRR…TFIEDFHYIF (179 aa)). Residues 1425 to 1482 (DDDYDSSSFGSNNTPSSHSPHSSSPTLNPAVTTTTTTTTTTNTTTTTNTTTTPTSATI) form a disordered region. Residues 1430–1476 (SSSFGSNNTPSSHSPHSSSPTLNPAVTTTTTTTTTTNTTTTTNTTTT) show a composition bias toward low complexity.

It localises to the cytoplasm. Functionally, rho GTPase-activating protein involved in the signal transduction pathway. In Dictyostelium discoideum (Social amoeba), this protein is Rho GTPase-activating protein gacHH (gacHH).